A 327-amino-acid chain; its full sequence is GMP reductase (327 aa).

The Thioimidate intermediate role is filled by C176. 205–228 (IIADGGIRTHGDIAKSIRFGASMV) provides a ligand contact to NADP(+).

The protein belongs to the IMPDH/GMPR family. GuaC type 2 subfamily.

It carries out the reaction IMP + NH4(+) + NADP(+) = GMP + NADPH + 2 H(+). In terms of biological role, catalyzes the irreversible NADPH-dependent deamination of GMP to IMP. It functions in the conversion of nucleobase, nucleoside and nucleotide derivatives of G to A nucleotides, and in maintaining the intracellular balance of A and G nucleotides. This chain is GMP reductase, found in Streptococcus gordonii (strain Challis / ATCC 35105 / BCRC 15272 / CH1 / DL1 / V288).